The chain runs to 298 residues: GTPase Era (298 aa).

In terms of domain architecture, Era-type G spans 3–170 (KSGFVAILGR…VQLLKDNLEE (168 aa)). A G1 region spans residues 11 to 18 (GRPNVGKS). 11–18 (GRPNVGKS) provides a ligand contact to GTP. The tract at residues 37–41 (QTTRN) is G2. Residues 58–61 (DTPG) are G3. GTP is bound by residues 58 to 62 (DTPGI) and 120 to 123 (NKID). The segment at 120-123 (NKID) is G4. The G5 stretch occupies residues 149–151 (ISA). Residues 201–279 (TQQEVPHSVA…YLETWVKVKK (79 aa)) form the KH type-2 domain.

Belongs to the TRAFAC class TrmE-Era-EngA-EngB-Septin-like GTPase superfamily. Era GTPase family. In terms of assembly, monomer.

Its subcellular location is the cytoplasm. It localises to the cell membrane. An essential GTPase that binds both GDP and GTP, with rapid nucleotide exchange. Plays a role in 16S rRNA processing and 30S ribosomal subunit biogenesis and possibly also in cell cycle regulation and energy metabolism. The chain is GTPase Era from Streptococcus equi subsp. equi (strain 4047).